Consider the following 131-residue polypeptide: Small ribosomal subunit protein uS8 (131 aa).

It belongs to the universal ribosomal protein uS8 family. In terms of assembly, part of the 30S ribosomal subunit. Contacts proteins S5 and S12.

One of the primary rRNA binding proteins, it binds directly to 16S rRNA central domain where it helps coordinate assembly of the platform of the 30S subunit. This chain is Small ribosomal subunit protein uS8, found in Ralstonia nicotianae (strain ATCC BAA-1114 / GMI1000) (Ralstonia solanacearum).